The chain runs to 157 residues: Transcription elongation factor GreA (157 aa).

Positions 47–75 form a coiled coil; that stretch reads SGEYEDAKKAQALLEGRIRELKHLLSRAE.

Belongs to the GreA/GreB family.

Necessary for efficient RNA polymerase transcription elongation past template-encoded arresting sites. The arresting sites in DNA have the property of trapping a certain fraction of elongating RNA polymerases that pass through, resulting in locked ternary complexes. Cleavage of the nascent transcript by cleavage factors such as GreA or GreB allows the resumption of elongation from the new 3'terminus. GreA releases sequences of 2 to 3 nucleotides. This is Transcription elongation factor GreA from Chloroflexus aggregans (strain MD-66 / DSM 9485).